Consider the following 195-residue polypeptide: Nicotinamide riboside kinase 1 (195 aa).

10-18 (GVTNGGKTT) contacts ATP. Mg(2+)-binding residues include T17 and D36. Catalysis depends on D36, which acts as the Proton acceptor. Substrate contacts are provided by residues 36 to 39 (DDFF) and 55 to 56 (YD). R128 serves as a coordination point for ATP. Substrate contacts are provided by residues R129 and 134-135 (YE). Residues 132–134 (RVY) and 172–174 (RSE) each bind ATP.

This sequence belongs to the uridine kinase family. NRK subfamily. Monomer.

The enzyme catalyses beta-nicotinamide D-riboside + ATP = beta-nicotinamide D-ribonucleotide + ADP + H(+). The catalysed reaction is beta-D-ribosylnicotinate + ATP = nicotinate beta-D-ribonucleotide + ADP + H(+). Its pathway is cofactor biosynthesis; NAD(+) biosynthesis. Catalyzes the phosphorylation of nicotinamide riboside (NR) and nicotinic acid riboside (NaR) to form nicotinamide mononucleotide (NMN) and nicotinic acid mononucleotide (NaMN). This is Nicotinamide riboside kinase 1 (Nmrk1) from Rattus norvegicus (Rat).